We begin with the raw amino-acid sequence, 380 residues long: Glucose-1-phosphate adenylyltransferase (380 aa).

Alpha-D-glucose 1-phosphate is bound by residues Gly164, 179–180 (EK), and Ser190.

This sequence belongs to the bacterial/plant glucose-1-phosphate adenylyltransferase family. In terms of assembly, homotetramer.

The enzyme catalyses alpha-D-glucose 1-phosphate + ATP + H(+) = ADP-alpha-D-glucose + diphosphate. It functions in the pathway glycan biosynthesis; glycogen biosynthesis. Its function is as follows. Involved in the biosynthesis of ADP-glucose, a building block required for the elongation reactions to produce glycogen. Catalyzes the reaction between ATP and alpha-D-glucose 1-phosphate (G1P) to produce pyrophosphate and ADP-Glc. The sequence is that of Glucose-1-phosphate adenylyltransferase from Streptococcus pneumoniae (strain CGSP14).